Reading from the N-terminus, the 196-residue chain is MLICVVGMPGAGKGEFVKVAREEGIPVVVMGDAVRREAERRGMDVGEMAKRLREERGMDAVARLVEEDVERELRRAGVVVIDGIRNPEELEYFRDRFGERSVIVVAIHASPQTRFERLRIRGREDDPDTKREFEERDERELGFGIGDVISRADVMIVNERVSLPEFREKCRMVIRAILRGDPDDLPGGFDHLRVPD.

ATP is bound at residue 7-14 (GMPGAGKG).

The protein belongs to the UPF0200 family.

This chain is UPF0200 protein MK0400, found in Methanopyrus kandleri (strain AV19 / DSM 6324 / JCM 9639 / NBRC 100938).